The primary structure comprises 519 residues: C-glycoside 3-oxidase (519 aa).

Position 41 (Glu-41) interacts with FAD. Positions 43-93 (GPTVSNPPGAHVKNIEDPERRSHAQRASEGPGAGAETVNSPGAVKSGERRA) are disordered. Residues 55–64 (KNIEDPERRS) show a composition bias toward basic and acidic residues. Residues Ser-118, Asn-120, Met-124, Thr-129, Ala-131, and Val-234 each contribute to the FAD site. His-440 functions as the Proton acceptor in the catalytic mechanism. 2 residues coordinate FAD: Asn-474 and Thr-486.

This sequence belongs to the GMC oxidoreductase family. Monomer. It depends on FAD as a cofactor.

The catalysed reaction is isovitexin + O2 = 3''-dehydroisovitexin + H2O2. The enzyme catalyses isoorientin + O2 = 3''-dehydroisoorientin + H2O2. It catalyses the reaction mangiferin + O2 = 3'-dehydromangiferin + H2O2. Its function is as follows. FAD-dependent C-glycoside-metabolizing enzyme that participates in the degradation of certain C-glycosides by catalyzing the oxidation of the hydroxyl group at the C3 position of the sugar moiety. Shows oxidase activity toward various C-glycosides such as isovitexin, isoorientin and mangiferin but cannot use carminic acid, puerarin, orientin or aloesin. Shows weak activity (100 to 1000-fold lower) with O-glycosides. Probably plays a crucial role in the metabolism of C-glycosides in nature. The sequence is that of C-glycoside 3-oxidase from Arthrobacter globiformis (strain ATCC 8010 / DSM 20124 / JCM 1332 / NBRC 12137 / NCIMB 8907 / NRRL B-2979 / 168).